Reading from the N-terminus, the 1415-residue chain is DNA-directed RNA polymerase subunit beta' (1415 aa).

Zn(2+)-binding residues include Cys70, Cys72, Cys85, and Cys88. Residues Asp461, Asp463, and Asp465 each coordinate Mg(2+). Zn(2+)-binding residues include Cys820, Cys894, Cys901, and Cys904.

This sequence belongs to the RNA polymerase beta' chain family. In terms of assembly, the RNAP catalytic core consists of 2 alpha, 1 beta, 1 beta' and 1 omega subunit. When a sigma factor is associated with the core the holoenzyme is formed, which can initiate transcription. The cofactor is Mg(2+). Zn(2+) is required as a cofactor.

It carries out the reaction RNA(n) + a ribonucleoside 5'-triphosphate = RNA(n+1) + diphosphate. In terms of biological role, DNA-dependent RNA polymerase catalyzes the transcription of DNA into RNA using the four ribonucleoside triphosphates as substrates. In Cupriavidus necator (strain ATCC 17699 / DSM 428 / KCTC 22496 / NCIMB 10442 / H16 / Stanier 337) (Ralstonia eutropha), this protein is DNA-directed RNA polymerase subunit beta'.